The following is a 139-amino-acid chain: D-ribose pyranase (139 aa).

His-20 (proton donor) is an active-site residue. Residues Asp-28, His-106, and Tyr-128–Asn-130 contribute to the substrate site.

Belongs to the RbsD / FucU family. RbsD subfamily. In terms of assembly, homodecamer.

The protein localises to the cytoplasm. It catalyses the reaction beta-D-ribopyranose = beta-D-ribofuranose. It participates in carbohydrate metabolism; D-ribose degradation; D-ribose 5-phosphate from beta-D-ribopyranose: step 1/2. Its function is as follows. Catalyzes the interconversion of beta-pyran and beta-furan forms of D-ribose. The protein is D-ribose pyranase of Vibrio parahaemolyticus serotype O3:K6 (strain RIMD 2210633).